The following is a 132-amino-acid chain: Small ribosomal subunit protein uS9 (132 aa).

It belongs to the universal ribosomal protein uS9 family.

This Methanothrix thermoacetophila (strain DSM 6194 / JCM 14653 / NBRC 101360 / PT) (Methanosaeta thermophila) protein is Small ribosomal subunit protein uS9.